The following is a 408-amino-acid chain: UDP-N-acetylglucosamine--N-acetylmuramyl-(pentapeptide) pyrophosphoryl-undecaprenol N-acetylglucosamine transferase (408 aa).

The segment at 1–20 (MNDTVKKPTGGRGDDPLPAG) is disordered. UDP-N-acetyl-alpha-D-glucosamine-binding positions include 41-43 (TAG), Asn160, Arg197, Ser231, and Gln327.

The protein belongs to the glycosyltransferase 28 family. MurG subfamily.

The protein resides in the cell membrane. It catalyses the reaction di-trans,octa-cis-undecaprenyl diphospho-N-acetyl-alpha-D-muramoyl-L-alanyl-D-glutamyl-meso-2,6-diaminopimeloyl-D-alanyl-D-alanine + UDP-N-acetyl-alpha-D-glucosamine = di-trans,octa-cis-undecaprenyl diphospho-[N-acetyl-alpha-D-glucosaminyl-(1-&gt;4)]-N-acetyl-alpha-D-muramoyl-L-alanyl-D-glutamyl-meso-2,6-diaminopimeloyl-D-alanyl-D-alanine + UDP + H(+). The protein operates within cell wall biogenesis; peptidoglycan biosynthesis. Cell wall formation. Catalyzes the transfer of a GlcNAc subunit on undecaprenyl-pyrophosphoryl-MurNAc-pentapeptide (lipid intermediate I) to form undecaprenyl-pyrophosphoryl-MurNAc-(pentapeptide)GlcNAc (lipid intermediate II). The sequence is that of UDP-N-acetylglucosamine--N-acetylmuramyl-(pentapeptide) pyrophosphoryl-undecaprenol N-acetylglucosamine transferase from Mycobacterium avium (strain 104).